The primary structure comprises 100 residues: HssA/B-like protein 37 (100 aa).

2 disordered regions span residues 1-29 (MTLF…SGTS) and 67-100 (RSRG…CCGI). The span at 71-93 (SCGGNRGNGNGNGGMGGGNGSCC) shows a compositional bias: gly residues.

It belongs to the hssA/B family.

The protein is HssA/B-like protein 37 (hssl37) of Dictyostelium discoideum (Social amoeba).